The primary structure comprises 463 residues: L-seryl-tRNA(Sec) selenium transferase (463 aa).

Lys295 is subject to N6-(pyridoxal phosphate)lysine.

This sequence belongs to the SelA family. In terms of assembly, homodecamer; pentamer of dimers. Binds only one seryl-tRNA(Sec) per dimer. The cofactor is pyridoxal 5'-phosphate.

The protein localises to the cytoplasm. It carries out the reaction L-seryl-tRNA(Sec) + selenophosphate + H(+) = L-selenocysteinyl-tRNA(Sec) + phosphate. It participates in aminoacyl-tRNA biosynthesis; selenocysteinyl-tRNA(Sec) biosynthesis; selenocysteinyl-tRNA(Sec) from L-seryl-tRNA(Sec) (bacterial route): step 1/1. Converts seryl-tRNA(Sec) to selenocysteinyl-tRNA(Sec) required for selenoprotein biosynthesis. This is L-seryl-tRNA(Sec) selenium transferase from Shigella dysenteriae serotype 1 (strain Sd197).